The sequence spans 748 residues: MEYTYQYSWIIPFISLPIPILIGVGLLLFPTATKNLRRLWSFPSILLLSIVMIFAVYLSIDQINTSYIYQYVWSWTINNDFSLELGYFIDPLTCIMAILITTVGIMVLIYSDNYMSHDQGYLRFFAYMSLFNTSMLGLVTSSNLIQIYIFWELVGMCSYLLIGFWFTRPTAANACQKAFVTNRVGDFGLLLGILGLYWTTGSFEFRDLFQIFNNLIDNNEVNFLFLTLCAVLLFAGAVAKSAQFPLHVWLPDAMEGPTPISALIHAATMVAAGIFLVARLLPLFIAIPYIMNLIALIGIITVLFGATLALAQKDIKRSLAYSTMSQLGYMMLALGMGSYQAALFHLITHAYSKALLFLGSGSIIHSMESVVGYSPDKSQNMVLMGGLTKHVPITKNAFLLGTLSLCGVPPLACFWSKDEILNDSWLYSPIFAIIACSTAGLTAFYMFRIYLLTFDGHLNLYCKNYSGKTNNSLYSISLWGKEGSKIIKKNFPFFSLLTMNNKERSSFWMKKTTYPFNSNVTKKMRPFVSSPHFSTKNTFYYPYESENTMLFPMFVLSLFTLFVGVIGSPFTQFNQEAIDLNILDKWLTPSINLLHESSKDSENWYEFVKNATFSVTIAFFGIFIASFFYKPTYSSLQNLNFRNSFVKSFTKNFFFEKIINIIYNWSYNRGYIDTFYRISLIGGIRILAELTYFFDRRIIDGITNAVGILNFFVAESIKYVGGGRISSYILLYLVYLVIFILVIYFVFF.

16 consecutive transmembrane segments (helical) span residues 9–29, 40–60, 89–109, 125–145, 147–167, 185–205, 219–239, 258–278, 280–300, 327–347, 354–374, 396–416, 425–445, 550–570, 611–631, and 728–748; these read WIIP…LLLF, WSFP…YLSI, IDPL…MVLI, FAYM…SNLI, IYIF…FWFT, GDFG…SFEF, NEVN…GAVA, TPIS…FLVA, LLPL…IGII, LGYM…FHLI, ALLF…VGYS, NAFL…CFWS, WLYS…TAFY, LFPM…GSPF, ATFS…FYKP, and YILL…FVFF.

The protein belongs to the complex I subunit 5 family. NDH is composed of at least 16 different subunits, 5 of which are encoded in the nucleus.

The protein localises to the plastid. The protein resides in the chloroplast thylakoid membrane. The enzyme catalyses a plastoquinone + NADH + (n+1) H(+)(in) = a plastoquinol + NAD(+) + n H(+)(out). It carries out the reaction a plastoquinone + NADPH + (n+1) H(+)(in) = a plastoquinol + NADP(+) + n H(+)(out). NDH shuttles electrons from NAD(P)H:plastoquinone, via FMN and iron-sulfur (Fe-S) centers, to quinones in the photosynthetic chain and possibly in a chloroplast respiratory chain. The immediate electron acceptor for the enzyme in this species is believed to be plastoquinone. Couples the redox reaction to proton translocation, and thus conserves the redox energy in a proton gradient. The chain is NAD(P)H-quinone oxidoreductase subunit 5, chloroplastic (ndhF) from Cucumis sativus (Cucumber).